Reading from the N-terminus, the 174-residue chain is Peptide methionine sulfoxide reductase MsrA (174 aa).

Cys-11 is an active-site residue.

Belongs to the MsrA Met sulfoxide reductase family.

The catalysed reaction is L-methionyl-[protein] + [thioredoxin]-disulfide + H2O = L-methionyl-(S)-S-oxide-[protein] + [thioredoxin]-dithiol. The enzyme catalyses [thioredoxin]-disulfide + L-methionine + H2O = L-methionine (S)-S-oxide + [thioredoxin]-dithiol. Its function is as follows. Has an important function as a repair enzyme for proteins that have been inactivated by oxidation. Catalyzes the reversible oxidation-reduction of methionine sulfoxide in proteins to methionine. The sequence is that of Peptide methionine sulfoxide reductase MsrA from Nitratiruptor sp. (strain SB155-2).